The following is a 206-amino-acid chain: Small ribosomal subunit protein uS4 (206 aa).

The 63-residue stretch at 96–158 (SRLDNVVYRM…AKGQLRIKGA (63 aa)) folds into the S4 RNA-binding domain.

This sequence belongs to the universal ribosomal protein uS4 family. In terms of assembly, part of the 30S ribosomal subunit. Contacts protein S5. The interaction surface between S4 and S5 is involved in control of translational fidelity.

In terms of biological role, one of the primary rRNA binding proteins, it binds directly to 16S rRNA where it nucleates assembly of the body of the 30S subunit. Functionally, with S5 and S12 plays an important role in translational accuracy. The sequence is that of Small ribosomal subunit protein uS4 from Coxiella burnetii (strain CbuG_Q212) (Coxiella burnetii (strain Q212)).